The following is a 176-amino-acid chain: Large ribosomal subunit protein uL10 (176 aa).

It belongs to the universal ribosomal protein uL10 family. Part of the ribosomal stalk of the 50S ribosomal subunit. The N-terminus interacts with L11 and the large rRNA to form the base of the stalk. The C-terminus forms an elongated spine to which L12 dimers bind in a sequential fashion forming a multimeric L10(L12)X complex.

Its function is as follows. Forms part of the ribosomal stalk, playing a central role in the interaction of the ribosome with GTP-bound translation factors. This chain is Large ribosomal subunit protein uL10, found in Hahella chejuensis (strain KCTC 2396).